The sequence spans 164 residues: Transcription antitermination protein NusB (164 aa).

Belongs to the NusB family.

Involved in transcription antitermination. Required for transcription of ribosomal RNA (rRNA) genes. Binds specifically to the boxA antiterminator sequence of the ribosomal RNA (rrn) operons. This is Transcription antitermination protein NusB from Desulfovibrio desulfuricans (strain ATCC 27774 / DSM 6949 / MB).